The following is a 938-amino-acid chain: LPS-assembly protein LptD (938 aa).

The signal sequence occupies residues 1 to 33 (MAVKHPAFRKKFPLLVTGSLLALQPAFSLQSFA). Residues 52 to 96 (KTATSALPPRPQHSRSAVSTTSGSATATATKQEPAPVLVTESKGR) form a disordered region. Low complexity predominate over residues 65–81 (SRSAVSTTSGSATATAT).

This sequence belongs to the LptD family. Component of the lipopolysaccharide transport and assembly complex. Interacts with LptE and LptA.

The protein resides in the cell outer membrane. Its function is as follows. Together with LptE, is involved in the assembly of lipopolysaccharide (LPS) at the surface of the outer membrane. This chain is LPS-assembly protein LptD, found in Ectopseudomonas mendocina (strain ymp) (Pseudomonas mendocina).